We begin with the raw amino-acid sequence, 340 residues long: Glycerol-3-phosphate dehydrogenase [NAD(P)+] (340 aa).

4 residues coordinate NADPH: S11, W12, R33, and K106. Sn-glycerol 3-phosphate contacts are provided by K106, G137, and S139. Residue A141 coordinates NADPH. 5 residues coordinate sn-glycerol 3-phosphate: K192, D245, S255, R256, and N257. K192 serves as the catalytic Proton acceptor. R256 lines the NADPH pocket. Positions 280 and 282 each coordinate NADPH.

This sequence belongs to the NAD-dependent glycerol-3-phosphate dehydrogenase family.

The protein localises to the cytoplasm. The enzyme catalyses sn-glycerol 3-phosphate + NAD(+) = dihydroxyacetone phosphate + NADH + H(+). It catalyses the reaction sn-glycerol 3-phosphate + NADP(+) = dihydroxyacetone phosphate + NADPH + H(+). It functions in the pathway membrane lipid metabolism; glycerophospholipid metabolism. Functionally, catalyzes the reduction of the glycolytic intermediate dihydroxyacetone phosphate (DHAP) to sn-glycerol 3-phosphate (G3P), the key precursor for phospholipid synthesis. The sequence is that of Glycerol-3-phosphate dehydrogenase [NAD(P)+] from Bacillus cereus (strain ATCC 10987 / NRS 248).